The following is a 167-amino-acid chain: Translationally-controlled tumor protein homolog (167 aa).

Residues 1 to 167 (MIIYKDIFSN…WKHGIVEEKI (167 aa)) enclose the TCTP domain. A phosphoserine mark is found at Ser-9 and Ser-15.

Belongs to the TCTP family. Interacts with the 40S and 60S ribosomal subunits. Interacts with microtubules.

It localises to the cytoplasm. It is found in the cytoskeleton. The protein resides in the mitochondrion. Its function is as follows. Involved in protein synthesis. Involved in microtubule stabilization. This Saccharomyces cerevisiae (strain ATCC 204508 / S288c) (Baker's yeast) protein is Translationally-controlled tumor protein homolog (TMA19).